The primary structure comprises 230 residues: Ureidoacrylate amidohydrolase RutB (230 aa).

The active-site Proton acceptor is the aspartate 24. Lysine 133 is a catalytic residue. The active-site Nucleophile is cysteine 166.

This sequence belongs to the isochorismatase family. RutB subfamily.

The enzyme catalyses (Z)-3-ureidoacrylate + H2O + H(+) = (Z)-3-aminoacrylate + NH4(+) + CO2. It catalyses the reaction (Z)-3-ureidoacrylate + H2O = (Z)-3-aminoacrylate + carbamate + H(+). The catalysed reaction is (Z)-2-methylureidoacrylate + H2O + H(+) = (Z)-2-methylaminoacrylate + NH4(+) + CO2. Hydrolyzes ureidoacrylate to form aminoacrylate and carbamate. The carbamate hydrolyzes spontaneously, thereby releasing one of the nitrogen atoms of the pyrimidine ring as ammonia and one of its carbon atoms as CO2. This is Ureidoacrylate amidohydrolase RutB from Escherichia coli O7:K1 (strain IAI39 / ExPEC).